Reading from the N-terminus, the 457-residue chain is Senescence-associated protein OSA15, chloroplastic (457 aa).

The N-terminal 57 residues, 1–57, are a transit peptide targeting the chloroplast; that stretch reads MATRIPGTVAASGVYYNDQYRMPCKLKGIHCMALNCIPQKAKVRKCMNGYQSTFRFC.

It belongs to the ATA15/OSA15 family. As to expression, expressed in leaves (at protein level).

Its subcellular location is the plastid. It localises to the chloroplast. Its function is as follows. May be involved in the regulation of leaf senescence. The polypeptide is Senescence-associated protein OSA15, chloroplastic (Oryza sativa subsp. japonica (Rice)).